Here is a 485-residue protein sequence, read N- to C-terminus: Glucagon receptor (485 aa).

Residues 1-26 (MLLTQLHCPYLLLLLVVLSCLPKAPS) form the signal peptide. The Extracellular portion of the chain corresponds to 27 to 137 (AQVMDFLFEK…EIEVQKGVAK (111 aa)). 3 disulfide bridges follow: Cys44–Cys68, Cys59–Cys101, and Cys82–Cys122. Residues Asn47, Asn60, Asn75, and Asn79 are each glycosylated (N-linked (GlcNAc...) asparagine). Residues 138 to 162 (MYSSYQVMYTVGYSLSLGALLLALV) traverse the membrane as a helical segment. The Cytoplasmic portion of the chain corresponds to 163-174 (ILLGLRKLHCTR). The helical transmembrane segment at 175–199 (NYIHGNLFASFVLKAGSVLVIDWLL) threads the bilayer. Residues 200 to 226 (KTRYSQKIGDDLSVSVWLSDGAVAGCR) lie on the Extracellular side of the membrane. A disulfide bridge links Cys225 with Cys295. A helical transmembrane segment spans residues 227–250 (VATVIMQYGIIANYCWLLVEGVYL). Residues 251–264 (YSLLSITTFSEKSF) lie on the Cytoplasmic side of the membrane. A helical membrane pass occupies residues 265 to 286 (FSLYLCIGWGSPLLFVIPWVVV). Residues 287-304 (KCLFENVQCWTSNDNMGF) are Extracellular-facing. The chain crosses the membrane as a helical span at residues 305–327 (WWILRIPVLLAILINFFIFVRII). The Cytoplasmic segment spans residues 328-351 (HLLVAKLRAHQMHYADYKFRLARS). Residues 351–354 (STLT) are important for allosteric inhibitor binding. A helical transmembrane segment spans residues 352–370 (TLTLIPLLGVHEVVFAFVT). Topologically, residues 371 to 382 (DEHAQGTLRSTK) are extracellular. A helical transmembrane segment spans residues 383–403 (LFFDLFFSSFQGLLVAVLYCF). At 404–485 (LNKEVQAELL…SLPRLADSPT (82 aa)) the chain is on the cytoplasmic side. The disordered stretch occupies residues 455-485 (MSAGSSSGTGCEPSAKTSLASSLPRLADSPT). The span at 456 to 475 (SAGSSSGTGCEPSAKTSLAS) shows a compositional bias: polar residues. Phosphoserine is present on residues Ser460 and Ser476.

It belongs to the G-protein coupled receptor 2 family. Post-translationally, ligand-binding promotes phosphorylation of serine residues in the C-terminal cytoplasmic domain. Phosphorylation is important for receptor endocytosis after ligand-binding.

The protein localises to the cell membrane. Functionally, G-protein coupled receptor for glucagon that plays a central role in the regulation of blood glucose levels and glucose homeostasis. Regulates the rate of hepatic glucose production by promoting glycogen hydrolysis and gluconeogenesis. Plays an important role in mediating the responses to fasting. Ligand binding causes a conformation change that triggers signaling via guanine nucleotide-binding proteins (G proteins) and modulates the activity of down-stream effectors, such as adenylate cyclase. Promotes activation of adenylate cyclase. Besides, plays a role in signaling via a phosphatidylinositol-calcium second messenger system. This Rattus norvegicus (Rat) protein is Glucagon receptor (Gcgr).